We begin with the raw amino-acid sequence, 146 residues long: Hemoglobin subunit beta-A/B (146 aa).

Gly-1 carries the post-translational modification N-acetylserine; in variant beta-B. The Globin domain maps to Phe-2–His-146. Phosphoserine is present on Ser-44. An N6-acetyllysine modification is found at Lys-59. His-63 provides a ligand contact to heme b. An N6-acetyllysine modification is found at Lys-82. Residue His-92 coordinates heme b. An S-nitrosocysteine modification is found at Cys-93. N6-acetyllysine is present on Lys-144.

Belongs to the globin family. In terms of assembly, heterotetramer of two alpha chains and two beta chains. As to expression, red blood cells.

Involved in oxygen transport from the lung to the various peripheral tissues. The protein is Hemoglobin subunit beta-A/B (HBB) of Felis catus (Cat).